Consider the following 259-residue polypeptide: Dihydroorotate dehydrogenase B (NAD(+)), electron transfer subunit (259 aa).

In terms of domain architecture, FAD-binding FR-type spans 2–102 (MQKQNMIVVN…LGPLGHGFPV (101 aa)). FAD contacts are provided by residues 53-56 (RPIS), 70-72 (LYR), and 77-78 (GT). [2Fe-2S] cluster is bound by residues Cys-221, Cys-226, Cys-229, and Cys-246.

It belongs to the PyrK family. Heterotetramer of 2 PyrK and 2 PyrD type B subunits. It depends on [2Fe-2S] cluster as a cofactor. Requires FAD as cofactor.

Its pathway is pyrimidine metabolism; UMP biosynthesis via de novo pathway; orotate from (S)-dihydroorotate (NAD(+) route): step 1/1. Functionally, responsible for channeling the electrons from the oxidation of dihydroorotate from the FMN redox center in the PyrD type B subunit to the ultimate electron acceptor NAD(+). The protein is Dihydroorotate dehydrogenase B (NAD(+)), electron transfer subunit of Bacillus cereus (strain ATCC 14579 / DSM 31 / CCUG 7414 / JCM 2152 / NBRC 15305 / NCIMB 9373 / NCTC 2599 / NRRL B-3711).